The sequence spans 276 residues: Energy-coupling factor transporter ATP-binding protein EcfA1 (276 aa).

An ABC transporter domain is found at 2 to 237 (IEIKNLKFKY…GSELVDLGLD (236 aa)). Position 37–44 (37–44 (GHNGSGKS)) interacts with ATP.

Belongs to the ABC transporter superfamily. Energy-coupling factor EcfA family. In terms of assembly, forms a stable energy-coupling factor (ECF) transporter complex composed of 2 membrane-embedded substrate-binding proteins (S component), 2 ATP-binding proteins (A component) and 2 transmembrane proteins (T component).

Its subcellular location is the cell membrane. Its function is as follows. ATP-binding (A) component of a common energy-coupling factor (ECF) ABC-transporter complex. Unlike classic ABC transporters this ECF transporter provides the energy necessary to transport a number of different substrates. The polypeptide is Energy-coupling factor transporter ATP-binding protein EcfA1 (Streptococcus thermophilus (strain ATCC BAA-491 / LMD-9)).